Reading from the N-terminus, the 307-residue chain is Homoserine O-acetyltransferase (307 aa).

The active-site Acyl-thioester intermediate is the Cys142. Positions 163 and 192 each coordinate substrate. Residue His235 is the Proton acceptor of the active site. Glu237 is an active-site residue. Arg249 contacts substrate.

It belongs to the MetA family.

The protein localises to the cytoplasm. The enzyme catalyses L-homoserine + acetyl-CoA = O-acetyl-L-homoserine + CoA. Its pathway is amino-acid biosynthesis; L-methionine biosynthesis via de novo pathway; O-acetyl-L-homoserine from L-homoserine: step 1/1. Its function is as follows. Transfers an acetyl group from acetyl-CoA to L-homoserine, forming acetyl-L-homoserine. This chain is Homoserine O-acetyltransferase, found in Rhizobium leguminosarum bv. trifolii (strain WSM2304).